A 127-amino-acid polypeptide reads, in one-letter code: Putative membrane protein insertion efficiency factor (127 aa).

A disordered region spans residues 71 to 106 (DPPPPPRLHRAAAARMPRQRDADPRDTTRCSSTGAE). Basic and acidic residues predominate over residues 88–98 (RQRDADPRDTT).

Belongs to the UPF0161 family.

Its subcellular location is the cell inner membrane. In terms of biological role, could be involved in insertion of integral membrane proteins into the membrane. The sequence is that of Putative membrane protein insertion efficiency factor from Sorangium cellulosum (strain So ce56) (Polyangium cellulosum (strain So ce56)).